Here is a 388-residue protein sequence, read N- to C-terminus: MRHCGWLLGLLSLFSLATHASDWQEIKNEAKGQTVWFNAWGGDTAINRYLDWVSGEMKTHYAINLKIVRLADAADAVKRIQTEAAAGRKTGGSVDLLWVNGENFRTLKEANLLQTGWAETLPNWRYVDTQLPVREDFSVPTQGAESPWGGAQLTFIARRDVTPQPPQTPQALLEFAKANPGTVTYPRPPDFTGTAFLEQLLIMLTPDPAALKEAPDDATFARVTAPLWQYLDVLHPYLWREGKDFPPSPARMDALLKAGTLRLSLTFNPAHAQQKIASGDLPASSYSFGFREGMIGNVHFVTIPANANASAAAKVVANFLLSPDAQLRKADPAVWGDPSVLDPQKLPDGQRESLQSRMPQDLPPVLAEPHAGWVNALEQEWLHRYGTH.

The segment at 333 to 357 (AVWGDPSVLDPQKLPDGQRESLQSR) is disordered.

The protein is Protein YnjB (ynjB) of Escherichia coli (strain K12).